The following is a 340-amino-acid chain: Phosphoribosylformylglycinamidine cyclo-ligase (340 aa).

This sequence belongs to the AIR synthase family.

The protein resides in the cytoplasm. The enzyme catalyses 2-formamido-N(1)-(5-O-phospho-beta-D-ribosyl)acetamidine + ATP = 5-amino-1-(5-phospho-beta-D-ribosyl)imidazole + ADP + phosphate + H(+). The protein operates within purine metabolism; IMP biosynthesis via de novo pathway; 5-amino-1-(5-phospho-D-ribosyl)imidazole from N(2)-formyl-N(1)-(5-phospho-D-ribosyl)glycinamide: step 2/2. This Streptococcus pyogenes serotype M2 (strain MGAS10270) protein is Phosphoribosylformylglycinamidine cyclo-ligase.